A 171-amino-acid chain; its full sequence is Protein FAM209A (171 aa).

The signal sequence occupies residues 1–19 (MWTLKSSLVLLLCLTCSYA). The Extracellular portion of the chain corresponds to 20 to 52 (FMFSSLRQKTSEPQGKVQYGEHFRIRQNLPEHT). A helical transmembrane segment spans residues 53 to 73 (QGWLGSKWLWLLFVVVPFVIL). Residues 74–171 (QCQRDSEKNK…CEIWGEESSS (98 aa)) are Cytoplasmic-facing. Positions 81-107 (KNKEQSPPGLRGGQLHSPLKKKRNASP) are disordered. A coiled-coil region spans residues 114–139 (NTLMELEVELMKFVSKVRNLKRAMAT).

This sequence belongs to the FAM209 family. As to quaternary structure, interacts with DPY19L2. Interacts with CYLC1; the interaction may be relevant for proper acrosome attachment to the nuclear envelope.

It is found in the nucleus inner membrane. Its function is as follows. May play a role in sperm acrosome biogenesis. In Homo sapiens (Human), this protein is Protein FAM209A.